A 413-amino-acid polypeptide reads, in one-letter code: 2,3-diketo-5-methylthiopentyl-1-phosphate enolase (413 aa).

The active-site Proton acceptor is the lysine 98. Substrate is bound by residues lysine 147, 173 to 176 (KDDE), histidine 264, glycine 337, and 359 to 360 (GG). The Mg(2+) site is built by lysine 173, aspartate 175, and glutamate 176. Residue lysine 173 is modified to N6-carboxylysine.

Belongs to the RuBisCO large chain family. Type IV subfamily. As to quaternary structure, homodimer. Mg(2+) is required as a cofactor.

It carries out the reaction 5-methylsulfanyl-2,3-dioxopentyl phosphate = 2-hydroxy-5-methylsulfanyl-3-oxopent-1-enyl phosphate. Its pathway is amino-acid biosynthesis; L-methionine biosynthesis via salvage pathway; L-methionine from S-methyl-5-thio-alpha-D-ribose 1-phosphate: step 3/6. Its function is as follows. Catalyzes the enolization of 2,3-diketo-5-methylthiopentyl-1-phosphate (DK-MTP-1-P) into 2-hydroxy-3-keto-5-methylthiopentenyl-1-phosphate (HK-MTPenyl-1-P). The protein is 2,3-diketo-5-methylthiopentyl-1-phosphate enolase (mtnW) of Geobacillus kaustophilus (strain HTA426).